The chain runs to 289 residues: BTB/POZ domain-containing protein KCTD7 (289 aa).

Positions 1 to 42 (MVVVNGREPDSRHSDGAMSSSEAEDDFLEPATPTATQAGHGL) are disordered. One can recognise a BTB domain in the interval 53-141 (VPLNIGGAHF…YAIGPLLEQL (89 aa)).

In terms of assembly, interacts with CUL3.

It is found in the cell membrane. Its subcellular location is the cytoplasm. The protein resides in the cytosol. Its function is as follows. May be involved in the control of excitability of cortical neurons. The chain is BTB/POZ domain-containing protein KCTD7 (Kctd7) from Rattus norvegicus (Rat).